The chain runs to 201 residues: Small ribosomal subunit protein uS4 (201 aa).

The 64-residue stretch at 92–155 folds into the S4 RNA-binding domain; the sequence is ARLDNVVFRL…KSLEVIANSL (64 aa).

It belongs to the universal ribosomal protein uS4 family. Part of the 30S ribosomal subunit. Contacts protein S5. The interaction surface between S4 and S5 is involved in control of translational fidelity.

Its function is as follows. One of the primary rRNA binding proteins, it binds directly to 16S rRNA where it nucleates assembly of the body of the 30S subunit. In terms of biological role, with S5 and S12 plays an important role in translational accuracy. The sequence is that of Small ribosomal subunit protein uS4 from Phocaeicola vulgatus (strain ATCC 8482 / DSM 1447 / JCM 5826 / CCUG 4940 / NBRC 14291 / NCTC 11154) (Bacteroides vulgatus).